The following is a 167-amino-acid chain: Cyclic pyranopterin monophosphate synthase 2 (167 aa).

Residues 1-23 form a disordered region; that stretch reads MARASGASDYRSGELSHQDERGA. Residues 11–23 are compositionally biased toward basic and acidic residues; sequence RSGELSHQDERGA. Substrate contacts are provided by residues 86-88 and 122-123; these read LCH and ME. Asp137 is an active-site residue.

This sequence belongs to the MoaC family. Homohexamer; trimer of dimers.

It carries out the reaction (8S)-3',8-cyclo-7,8-dihydroguanosine 5'-triphosphate = cyclic pyranopterin phosphate + diphosphate. It functions in the pathway cofactor biosynthesis; molybdopterin biosynthesis. Its function is as follows. Catalyzes the conversion of (8S)-3',8-cyclo-7,8-dihydroguanosine 5'-triphosphate to cyclic pyranopterin monophosphate (cPMP). This is Cyclic pyranopterin monophosphate synthase 2 (moaC2) from Mycobacterium bovis (strain ATCC BAA-935 / AF2122/97).